Consider the following 38-residue polypeptide: Large ribosomal subunit protein bL36 (38 aa).

It belongs to the bacterial ribosomal protein bL36 family.

This is Large ribosomal subunit protein bL36 from Pseudoalteromonas atlantica (strain T6c / ATCC BAA-1087).